The sequence spans 270 residues: Orotidine 5'-phosphate decarboxylase (270 aa).

Residue Lys89 is the Proton donor of the active site.

Belongs to the OMP decarboxylase family. Type 2 subfamily.

It catalyses the reaction orotidine 5'-phosphate + H(+) = UMP + CO2. It participates in pyrimidine metabolism; UMP biosynthesis via de novo pathway; UMP from orotate: step 2/2. This Dehalococcoides mccartyi (strain ATCC BAA-2266 / KCTC 15142 / 195) (Dehalococcoides ethenogenes (strain 195)) protein is Orotidine 5'-phosphate decarboxylase.